The following is a 343-amino-acid chain: Uroporphyrinogen decarboxylase (343 aa).

Substrate is bound by residues 25-29 (RQAGR), Phe44, Asp75, Tyr150, Ser205, and His320.

Belongs to the uroporphyrinogen decarboxylase family. In terms of assembly, homodimer.

It localises to the cytoplasm. The catalysed reaction is uroporphyrinogen III + 4 H(+) = coproporphyrinogen III + 4 CO2. It participates in porphyrin-containing compound metabolism; protoporphyrin-IX biosynthesis; coproporphyrinogen-III from 5-aminolevulinate: step 4/4. Its function is as follows. Catalyzes the decarboxylation of four acetate groups of uroporphyrinogen-III to yield coproporphyrinogen-III. The polypeptide is Uroporphyrinogen decarboxylase (Mesorhizobium japonicum (strain LMG 29417 / CECT 9101 / MAFF 303099) (Mesorhizobium loti (strain MAFF 303099))).